The following is a 320-amino-acid chain: Cytochrome f (320 aa).

The N-terminal stretch at 1–35 (MENRKTFSWLKEQMIRSISVSIMIYVITRTSISNA) is a signal peptide. Residues Y36, C56, C59, and H60 each coordinate heme. The helical transmembrane segment at 286-306 (VQGLLFFFASVILAQVFLVLK) threads the bilayer.

This sequence belongs to the cytochrome f family. The 4 large subunits of the cytochrome b6-f complex are cytochrome b6, subunit IV (17 kDa polypeptide, petD), cytochrome f and the Rieske protein, while the 4 small subunits are PetG, PetL, PetM and PetN. The complex functions as a dimer. The cofactor is heme.

The protein resides in the plastid. It is found in the chloroplast thylakoid membrane. Functionally, component of the cytochrome b6-f complex, which mediates electron transfer between photosystem II (PSII) and photosystem I (PSI), cyclic electron flow around PSI, and state transitions. The chain is Cytochrome f from Saccharum hybrid (Sugarcane).